The following is a 375-amino-acid chain: 4-hydroxy-3-methylbut-2-en-1-yl diphosphate synthase (flavodoxin) (375 aa).

4 residues coordinate [4Fe-4S] cluster: cysteine 275, cysteine 278, cysteine 310, and glutamate 317.

The protein belongs to the IspG family. Requires [4Fe-4S] cluster as cofactor.

The catalysed reaction is (2E)-4-hydroxy-3-methylbut-2-enyl diphosphate + oxidized [flavodoxin] + H2O + 2 H(+) = 2-C-methyl-D-erythritol 2,4-cyclic diphosphate + reduced [flavodoxin]. It functions in the pathway isoprenoid biosynthesis; isopentenyl diphosphate biosynthesis via DXP pathway; isopentenyl diphosphate from 1-deoxy-D-xylulose 5-phosphate: step 5/6. Converts 2C-methyl-D-erythritol 2,4-cyclodiphosphate (ME-2,4cPP) into 1-hydroxy-2-methyl-2-(E)-butenyl 4-diphosphate. This is 4-hydroxy-3-methylbut-2-en-1-yl diphosphate synthase (flavodoxin) from Ruegeria pomeroyi (strain ATCC 700808 / DSM 15171 / DSS-3) (Silicibacter pomeroyi).